A 135-amino-acid polypeptide reads, in one-letter code: ATP synthase epsilon chain (135 aa).

The protein belongs to the ATPase epsilon chain family. F-type ATPases have 2 components, CF(1) - the catalytic core - and CF(0) - the membrane proton channel. CF(1) has five subunits: alpha(3), beta(3), gamma(1), delta(1), epsilon(1). CF(0) has three main subunits: a, b and c.

The protein localises to the cell inner membrane. In terms of biological role, produces ATP from ADP in the presence of a proton gradient across the membrane. This chain is ATP synthase epsilon chain, found in Chelativorans sp. (strain BNC1).